The following is a 25-amino-acid chain: Caerin 1.1 (25 aa).

Leucine amide is present on Leu25.

As to expression, expressed by the skin dorsal glands.

It is found in the secreted. Functionally, antibacterial peptide with wide spectrum of activity. Active against the Gram-positive bacteria B.cereus (MIC=50 ug/ml), E.faecalis (MIC=25 ug/ml), L.lactis (MIC=1.5 ug/ml), L.innocua (MIC=25 ug/ml), S.aureus (MIC=3 ug/ml), S.epidermidis (MIC=12 ug/ml) and S.uberis (MIC=12 ug/ml), and against the Gram-negative bacteria E.coli (MIC=100 ug/ml) and P.multocida (MIC=25 ug/ml). The sequence is that of Caerin 1.1 from Litoria peronii (Emerald spotted tree frog).